The primary structure comprises 96 residues: Large ribosomal subunit protein eL43 (96 aa).

The segment at 39–60 (CTFCGKTATKRTCVGIWKCKKC) adopts a C4-type zinc-finger fold.

It belongs to the eukaryotic ribosomal protein eL43 family. In terms of assembly, component of the large ribosomal subunit. Mature ribosomes consist of a small (40S) and a large (60S) subunit. The 40S subunit contains about 32 different proteins and 1 molecule of RNA (18S). The 60S subunit contains about 42 different proteins and 3 molecules of RNA (28S, 5.8S and 5S).

Its subcellular location is the cytoplasm. Functionally, component of the ribosome, a large ribonucleoprotein complex responsible for the synthesis of proteins in the cell. The small ribosomal subunit (SSU) binds messenger RNAs (mRNAs) and translates the encoded message by selecting cognate aminoacyl-transfer RNA (tRNA) molecules. The large subunit (LSU) contains the ribosomal catalytic site termed the peptidyl transferase center (PTC), which catalyzes the formation of peptide bonds, thereby polymerizing the amino acids delivered by tRNAs into a polypeptide chain. The nascent polypeptides leave the ribosome through a tunnel in the LSU and interact with protein factors that function in enzymatic processing, targeting, and the membrane insertion of nascent chains at the exit of the ribosomal tunnel. The polypeptide is Large ribosomal subunit protein eL43 (Plasmodium falciparum (isolate 3D7)).